The chain runs to 967 residues: RNA polymerase-associated protein RapA (967 aa).

The 175-residue stretch at 163–337 (EVGQRTAPRV…FARLSLLDPD (175 aa)) folds into the Helicase ATP-binding domain. ATP is bound at residue 176–183 (DEVGLGKT). Residues 283-286 (DEAH) carry the DEAH box motif. Residues 489-660 (RLEWLITFLK…KFLQNPTALE (172 aa)) enclose the Helicase C-terminal domain.

Belongs to the SNF2/RAD54 helicase family. RapA subfamily. In terms of assembly, interacts with the RNAP. Has a higher affinity for the core RNAP than for the holoenzyme. Its ATPase activity is stimulated by binding to RNAP.

Transcription regulator that activates transcription by stimulating RNA polymerase (RNAP) recycling in case of stress conditions such as supercoiled DNA or high salt concentrations. Probably acts by releasing the RNAP, when it is trapped or immobilized on tightly supercoiled DNA. Does not activate transcription on linear DNA. Probably not involved in DNA repair. This is RNA polymerase-associated protein RapA from Pasteurella multocida (strain Pm70).